Here is a 133-residue protein sequence, read N- to C-terminus: MSTTGKGGKAKGKTASSKQVSRSARAGLQFPVGRISRFLKNGRYSERIGTGAPVYLAAVLEYLAAEVLELAGNAAKDNKKTRIVPRHILLAIRNDEELNKLMANTTIADGGVLPNINPMLLPSKTKKSTEPEH.

The interval Met-1–Ser-23 is disordered. Ser-2 bears the N-acetylserine mark. Residues Lys-6, Lys-9, Lys-11, Lys-13, and Lys-18 each carry the N6-acetyllysine modification. Ser-123 bears the Phosphoserine mark. Residue Lys-124 forms a Glycyl lysine isopeptide (Lys-Gly) (interchain with G-Cter in ubiquitin) linkage.

Belongs to the histone H2A family. The nucleosome is a histone octamer containing two molecules each of H2A, H2B, H3 and H4 assembled in one H3-H4 heterotetramer and two H2A-H2B heterodimers. The octamer wraps approximately 147 bp of DNA. Post-translationally, monoubiquitination of Lys-124 gives a specific tag for epigenetic transcriptional repression. Acetylation occurs almost exclusively in the MAC.

It is found in the nucleus. The protein resides in the chromosome. In terms of biological role, core component of nucleosome. Nucleosomes wrap and compact DNA into chromatin, limiting DNA accessibility to the cellular machineries which require DNA as a template. Histones thereby play a central role in transcription regulation, DNA repair, DNA replication and chromosomal stability. DNA accessibility is regulated via a complex set of post-translational modifications of histones, also called histone code, and nucleosome remodeling. The chain is Histone H2A.1 (HTA2) from Tetrahymena thermophila (strain SB210).